We begin with the raw amino-acid sequence, 60 residues long: Large ribosomal subunit protein bL32 (60 aa).

Residues 1–16 show a composition bias toward basic residues; the sequence is MAVPRRKTSPSRRGMR. Positions 1–60 are disordered; sequence MAVPRRKTSPSRRGMRRSADAIKKPTYAEDKDSGELRRPHHLDLKTGMYKGRQVLIKKES. Basic and acidic residues predominate over residues 17–44; the sequence is RSADAIKKPTYAEDKDSGELRRPHHLDL.

Belongs to the bacterial ribosomal protein bL32 family.

This is Large ribosomal subunit protein bL32 from Rhodopseudomonas palustris (strain BisA53).